Consider the following 178-residue polypeptide: CASP-like protein 2U3 (178 aa).

The Cytoplasmic segment spans residues 1–4; the sequence is MACR. Residues 5 to 25 traverse the membrane as a helical segment; sequence VMEVLLRVLAILLSIAGALVM. Residues 26-52 are Extracellular-facing; the sequence is AKDKQDTFVMLGTVPVPLYARHSYVEA. Residues 53–73 form a helical membrane-spanning segment; it reads FVFLVYANGIVAIYCFIAVLL. The Cytoplasmic portion of the chain corresponds to 74-80; it reads SLLAKSR. The helical transmembrane segment at 81 to 101 threads the bilayer; that stretch reads VLAGLLFFMDQALAYLLLAAA. Over 102 to 132 the chain is Extracellular; that stretch reads AASTEVAYIAKRGEKKLVWGEVCSNFEHFCN. The chain crosses the membrane as a helical span at residues 133-153; the sequence is LVGVSLVLTFLSVLVLVTLAI. Residues 154 to 178 lie on the Cytoplasmic side of the membrane; the sequence is LSGKRLFGHPPLCAPPSTPPVHQGV.

The protein belongs to the Casparian strip membrane proteins (CASP) family. As to quaternary structure, homodimer and heterodimers.

The protein resides in the cell membrane. The chain is CASP-like protein 2U3 from Pteridium aquilinum subsp. aquilinum (Bracken fern).